A 60-amino-acid polypeptide reads, in one-letter code: UPF0434 protein CKO_02153 (60 aa).

The protein belongs to the UPF0434 family.

The sequence is that of UPF0434 protein CKO_02153 from Citrobacter koseri (strain ATCC BAA-895 / CDC 4225-83 / SGSC4696).